The primary structure comprises 254 residues: Low affinity immunoglobulin gamma Fc region receptor III-A (254 aa).

Positions 1–16 (MWQLLLPTALLLLVSA) are cleaved as a signal peptide. The Extracellular segment spans residues 17–208 (GMRTEDLPKA…ISSFFPPGYQ (192 aa)). Ig-like C2-type domains are found at residues 24-105 (PKAV…LEVH) and 107-189 (GWLL…VNIT). Cysteine 47 and cysteine 89 are disulfide-bonded. Residues asparagine 56, asparagine 63, and asparagine 92 are each glycosylated (N-linked (GlcNAc...) asparagine). The cysteines at positions 128 and 172 are disulfide-linked. Residues asparagine 180 and asparagine 187 are each glycosylated (N-linked (GlcNAc...) asparagine). A helical membrane pass occupies residues 209–229 (VSFCLVMVLLFAVDTGLYFSV). The Cytoplasmic segment spans residues 230–254 (KTNIRSSTRDWKDHKFKWRKDPQDK). At serine 236 the chain carries Phosphoserine; by PKC. Phosphothreonine; by PKC is present on threonine 237.

In terms of assembly, forms a heterooligomeric complex with ITAM-containing signaling subunits, either a homodimer of CD247, a homodimer of FCER1G or a heterodimer of CD247 and FCER1G. Interacts (via transmembrane domain) with signaling subunits; this interaction is a prerequisite for receptor complex expression on the cell surface and intracellular signal transduction. Binds the Fc region of antigen-complexed IgG with a preference for IgG1 and IgG3 isotypes. Interacts with CD2; this interaction is involved in NK cell activation and cytotoxicity. Interacts with S100A4; this interaction inhibits PKC-dependent phosphorylation of FCGR3A. Post-translationally, glycosylated. Contains high mannose- and complex-type oligosaccharides. Glycosylation at Asn-180 is mandatory for high affinity binding to the Fc and for discrimination between fucosylated and afucosylated IgG glycoforms. Undergoes rapid ectodomain shedding upon NK cell stimulation. The soluble form is produced by a proteolytic cleavage mediated by ADAM17. Repeated stimulation causes receptor shedding, a mechanism that allows for increased NK cell motility and detachment from opsonized target cells while avoiding activation-induced NK cell apoptosis. In terms of processing, phosphorylated at RSSTR motif by PKC. The relevant physiological PKCs might be PRKCI, PRKCG, PRKCE, PRKCH and PRKCQ. As to expression, expressed in natural killer cells (at protein level). Expressed in a subset of circulating monocytes (at protein level).

The protein localises to the cell membrane. It localises to the secreted. Its function is as follows. Receptor for the invariable Fc fragment of immunoglobulin gamma (IgG). Optimally activated upon binding of clustered antigen-IgG complexes displayed on cell surfaces, triggers lysis of antibody-coated cells, a process known as antibody-dependent cellular cytotoxicity (ADCC). Does not bind free monomeric IgG, thus avoiding inappropriate effector cell activation in the absence of antigenic trigger. Mediates IgG effector functions on natural killer (NK) cells. Binds antigen-IgG complexes generated upon infection and triggers NK cell-dependent cytokine production and degranulation to limit viral load and propagation. Involved in the generation of memory-like adaptive NK cells capable to produce high amounts of IFNG and to efficiently eliminate virus-infected cells via ADCC. Regulates NK cell survival and proliferation, in particular by preventing NK cell progenitor apoptosis. Fc-binding subunit that associates with CD247 and/or FCER1G adapters to form functional signaling complexes. Following the engagement of antigen-IgG complexes, triggers phosphorylation of immunoreceptor tyrosine-based activation motif (ITAM)-containing adapters with subsequent activation of phosphatidylinositol 3-kinase signaling and sustained elevation of intracellular calcium that ultimately drive NK cell activation. The ITAM-dependent signaling coupled to receptor phosphorylation by PKC mediates robust intracellular calcium flux that leads to production of pro-inflammatory cytokines, whereas in the absence of receptor phosphorylation it mainly activates phosphatidylinositol 3-kinase signaling leading to cell degranulation. Costimulates NK cells and trigger lysis of target cells independently of IgG binding. Mediates the antitumor activities of therapeutic antibodies. Upon ligation on monocytes triggers TNFA-dependent ADCC of IgG-coated tumor cells. Mediates enhanced ADCC in response to afucosylated IgGs. Functionally, (Microbial infection) Involved in Dengue virus pathogenesis via antibody-dependent enhancement (ADE) mechanism. Secondary infection with Dengue virus triggers elevated levels of afucosylated non-neutralizing IgG1s with reactivity to viral envelope/E protein. Viral antigen-IgG1 complexes bind with high affinity to FCGR3A, facilitating virus entry in myeloid cells and subsequent viral replication. This Homo sapiens (Human) protein is Low affinity immunoglobulin gamma Fc region receptor III-A.